Consider the following 149-residue polypeptide: L-alanine exporter AlaE (149 aa).

The next 4 helical transmembrane spans lie at 16-36, 46-66, 85-105, and 112-132; these read FAMV…LSGM, LVAI…RDLF, ILAY…VVGA, and AAVS…GYFL.

This sequence belongs to the AlaE exporter family.

Its subcellular location is the cell inner membrane. Functionally, exports L-alanine. This chain is L-alanine exporter AlaE, found in Shigella flexneri.